A 499-amino-acid chain; its full sequence is Terpentedienyl-diphosphate synthase (499 aa).

Residues Asp-284 and Asp-286 each coordinate Mg(2+). Positions Asp-284–Asp-287 match the DXDD motif motif.

It belongs to the terpene synthase family. Monomer. It depends on Mg(2+) as a cofactor.

The enzyme catalyses (2E,6E,10E)-geranylgeranyl diphosphate = terpentedienyl diphosphate. Its pathway is antibiotic biosynthesis. In terms of biological role, involved in the production of the isoprenoid antibiotic terpentecin. Converts geranylgeranyl diphosphate (GGDP) into terpentedienol diphosphate (TDP) by a protonation-initiated cyclization. The sequence is that of Terpentedienyl-diphosphate synthase (cyc1) from Kitasatospora griseola (Streptomyces griseolosporeus).